A 197-amino-acid polypeptide reads, in one-letter code: ATP-dependent Clp protease proteolytic subunit 1 (197 aa).

His-126 is an active-site residue.

Belongs to the peptidase S14 family. Fourteen ClpP subunits assemble into 2 heptameric rings which stack back to back to give a disk-like structure with a central cavity, resembling the structure of eukaryotic proteasomes.

It is found in the cytoplasm. It catalyses the reaction Hydrolysis of proteins to small peptides in the presence of ATP and magnesium. alpha-casein is the usual test substrate. In the absence of ATP, only oligopeptides shorter than five residues are hydrolyzed (such as succinyl-Leu-Tyr-|-NHMec, and Leu-Tyr-Leu-|-Tyr-Trp, in which cleavage of the -Tyr-|-Leu- and -Tyr-|-Trp bonds also occurs).. In terms of biological role, cleaves peptides in various proteins in a process that requires ATP hydrolysis. Has a chymotrypsin-like activity. Plays a major role in the degradation of misfolded proteins. The polypeptide is ATP-dependent Clp protease proteolytic subunit 1 (Nocardia farcinica (strain IFM 10152)).